Here is a 207-residue protein sequence, read N- to C-terminus: MANYDVLKVDGTKSGSVELSDAVFAIEPNNNVLFEAINLQRASLRQGTHAVKNRSAVRGGGRKPWRQKGTGRARQGTIRAPQWRGGGIVFGPTPRSYSYKMPKKMRRLALRSALSFKVQEKGLTVVDALNLDAPKTKEFKTVLSNLEQPKKVLVVTESEDVNVALSARNIPGVQVTTAQGLNVLDITSADSVVITESAAKKVEEVLG.

The tract at residues 53 to 76 is disordered; it reads NRSAVRGGGRKPWRQKGTGRARQG. The span at 60–71 shows a compositional bias: basic residues; it reads GGRKPWRQKGTG.

The protein belongs to the universal ribosomal protein uL4 family. As to quaternary structure, part of the 50S ribosomal subunit.

Its function is as follows. One of the primary rRNA binding proteins, this protein initially binds near the 5'-end of the 23S rRNA. It is important during the early stages of 50S assembly. It makes multiple contacts with different domains of the 23S rRNA in the assembled 50S subunit and ribosome. Functionally, forms part of the polypeptide exit tunnel. The polypeptide is Large ribosomal subunit protein uL4 (Staphylococcus saprophyticus subsp. saprophyticus (strain ATCC 15305 / DSM 20229 / NCIMB 8711 / NCTC 7292 / S-41)).